The chain runs to 1526 residues: Ig-like and fibronectin type-III domain-containing protein 2 (1526 aa).

The N-terminal stretch at 1–19 is a signal peptide; sequence MMRWRLAVLFLTLLASTTG. Residues 20 to 39 form a disordered region; the sequence is DDTTTKASVSTTTKKGTDGP. The Extracellular portion of the chain corresponds to 20 to 1415; sequence DDTTTKASVS…RRSASKGSSS (1396 aa). A compositionally biased stretch (low complexity) spans 24–33; that stretch reads TKASVSTTTK. In terms of domain architecture, Ig-like C2-type 1 spans 39–170; that stretch reads PHLTTDDEGF…ELLEFQVEVL (132 aa). A disulfide bridge connects residues C61 and C154. Residues N87, N143, N158, N181, N414, N427, N475, N489, N533, N590, N617, and N662 are each glycosylated (N-linked (GlcNAc...) asparagine). The Fibronectin type-III 1 domain maps to 379-470; the sequence is APRGKRDVDF…VRNIASTNVH (92 aa). Residues 587 to 678 enclose the Fibronectin type-III 2 domain; it reads APGNVTISEL…TAKLFSTLPT (92 aa). A WR1 domain is found at 682-724; sequence PLCTIGEPIYMNDGRVMICDAVNPCPNGFRCTGAGSDLSYCCP. N-linked (GlcNAc...) asparagine glycosylation is found at N754, N871, N906, N939, N979, N1004, and N1049. Fibronectin type-III domains are found at residues 827–914 and 924–1020; these read AVRN…TKPA and APEK…AQKD. The 92-residue stretch at 1116 to 1207 folds into the Ig-like C2-type 2 domain; sequence ASVTMKKDKI…SRVEASSEVI (92 aa). A disulfide bridge connects residues C1137 and C1190. The N-linked (GlcNAc...) asparagine glycan is linked to N1250. In terms of domain architecture, Fibronectin type-III 5 spans 1314–1406; it reads APSEVSNVRI…SAIPKDSEPR (93 aa). A helical membrane pass occupies residues 1416 to 1436; the sequence is AFWIVVILVVFGVLIAGLAVL. Residues 1437–1526 lie on the Cytoplasmic side of the membrane; the sequence is SKRRELPYPI…NGMRYAKLET (90 aa). Positions 1485-1518 are disordered; sequence SATTGTAAATQSEWQSANLEANSTTDNSHEYRNG. Over residues 1495-1510 the composition is skewed to polar residues; sequence QSEWQSANLEANSTTD.

The protein resides in the cell membrane. In Caenorhabditis elegans, this protein is Ig-like and fibronectin type-III domain-containing protein 2.